The primary structure comprises 268 residues: Aliphatic sulfonates import ATP-binding protein SsuB 2 (268 aa).

The ABC transporter domain maps to 15-236 (LAVRKLQKTF…VRGSHRLAAL (222 aa)). Position 47–54 (47–54 (GRSGCGKS)) interacts with ATP.

It belongs to the ABC transporter superfamily. Aliphatic sulfonates importer (TC 3.A.1.17.2) family. As to quaternary structure, the complex is composed of two ATP-binding proteins (SsuB), two transmembrane proteins (SsuC) and a solute-binding protein (SsuA).

The protein localises to the cell inner membrane. The enzyme catalyses ATP + H2O + aliphatic sulfonate-[sulfonate-binding protein]Side 1 = ADP + phosphate + aliphatic sulfonateSide 2 + [sulfonate-binding protein]Side 1.. Its function is as follows. Part of the ABC transporter complex SsuABC involved in aliphatic sulfonates import. Responsible for energy coupling to the transport system. The polypeptide is Aliphatic sulfonates import ATP-binding protein SsuB 2 (Pseudomonas fluorescens (strain ATCC BAA-477 / NRRL B-23932 / Pf-5)).